A 325-amino-acid polypeptide reads, in one-letter code: MSVRSVIRGSGSALPRRAVSNAEMTTMVDTTDEWIVERTGIRNRYIAGEGETTSTLATEAARKALEAAGVDASRIDLIVLATATPDQTFPATATIVQHNLGCNGGIAFDVAAVCSGFLYALATADSMIRSGMARCALVIGAETMSRLLDWEDRTTCVLFGDGAGAVVLEAVDVDETDPKAPGILATRLHADGAHNELLYVDGGPSTTGTVGKLRMKGREVFRHAVTNLANVLKEVLETTGHDAEEIDWVVPHQANFRILDATARKLDLPADKVIVTVDHHANTSAASVPLAYDTAVRDGRIKPGDLVMFEAMGGGFTWGASLARV.

Active-site residues include Cys-114 and His-252. Residues 253–257 form an ACP-binding region; that stretch reads QANFR. Residue Asn-282 is part of the active site.

This sequence belongs to the thiolase-like superfamily. FabH family. As to quaternary structure, homodimer.

It localises to the cytoplasm. The catalysed reaction is malonyl-[ACP] + acetyl-CoA + H(+) = 3-oxobutanoyl-[ACP] + CO2 + CoA. Its pathway is lipid metabolism; fatty acid biosynthesis. In terms of biological role, catalyzes the condensation reaction of fatty acid synthesis by the addition to an acyl acceptor of two carbons from malonyl-ACP. Catalyzes the first condensation reaction which initiates fatty acid synthesis and may therefore play a role in governing the total rate of fatty acid production. Possesses both acetoacetyl-ACP synthase and acetyl transacylase activities. Its substrate specificity determines the biosynthesis of branched-chain and/or straight-chain of fatty acids. The chain is Beta-ketoacyl-[acyl-carrier-protein] synthase III from Novosphingobium aromaticivorans (strain ATCC 700278 / DSM 12444 / CCUG 56034 / CIP 105152 / NBRC 16084 / F199).